Reading from the N-terminus, the 146-residue chain is Endoribonuclease YbeY (146 aa).

Residues His-108, His-112, and His-118 each coordinate Zn(2+).

The protein belongs to the endoribonuclease YbeY family. Zn(2+) is required as a cofactor.

It is found in the cytoplasm. Its function is as follows. Single strand-specific metallo-endoribonuclease involved in late-stage 70S ribosome quality control and in maturation of the 3' terminus of the 16S rRNA. The chain is Endoribonuclease YbeY from Onion yellows phytoplasma (strain OY-M).